We begin with the raw amino-acid sequence, 414 residues long: E3 ubiquitin-protein ligase makorin-2 (414 aa).

2 C3H1-type zinc fingers span residues 2–29 and 31–58; these read STKQVTCRYFLHGVCREGSRCLFSHDLT and SKPSTICKYYQRGACAYGDRCRYDHIKP. Residues 57 to 94 are disordered; sequence KPPGRGSGAPADHSNRSSSSAGASAPGPGPPANTSKHL. Residues 73–82 are compositionally biased toward low complexity; sequence SSSSAGASAP. The segment at 164-191 adopts a C3H1-type 3 zinc-finger fold; the sequence is QTSPQICPFLAAGQCQYGESCPYLHGEM. The segment at 192–221 is makorin-type Cys-His; sequence CEICRQHVLHPHDPEQRAAHEKKCMVAFEM. The segment at 237-291 adopts an RING-type zinc-finger fold; the sequence is CKICLDVVYEKSSPSERRFGILSSCAHTYCLNCIRQWRCVEQLHNQIRKSCPECR. Residues 320-349 form a C3H1-type 4 zinc finger; the sequence is GVSKKACKYFDQGRGTCPFGGKCFYMHAYA.

It localises to the cytoplasm. The protein localises to the nucleus. It carries out the reaction S-ubiquitinyl-[E2 ubiquitin-conjugating enzyme]-L-cysteine + [acceptor protein]-L-lysine = [E2 ubiquitin-conjugating enzyme]-L-cysteine + N(6)-ubiquitinyl-[acceptor protein]-L-lysine.. The protein operates within protein modification; protein ubiquitination. E3 ubiquitin ligase catalyzing the covalent attachment of ubiquitin moieties onto substrate proteins. Inhibits neurogenesis and axis formation during embryonic development by modulating the phosphatidylinositol 3-kinase (PI3K) pathway. Acts downstream of PI3K and akt1 to up-regulate gsk3b mRNA expression. The protein is E3 ubiquitin-protein ligase makorin-2 (mkrn2) of Danio rerio (Zebrafish).